The chain runs to 998 residues: Beta-galactosidase (998 aa).

E431 serves as the catalytic Proton donor. The active-site Nucleophile is the E508.

It belongs to the glycosyl hydrolase 2 family.

The catalysed reaction is Hydrolysis of terminal non-reducing beta-D-galactose residues in beta-D-galactosides.. This Lactococcus lactis subsp. lactis (strain IL1403) (Streptococcus lactis) protein is Beta-galactosidase (lacZ).